The sequence spans 533 residues: CTP synthase (533 aa).

Residues 1 to 265 (MTKFIFVTGG…ARYLVRRLGL (265 aa)) are amidoligase domain. Serine 13 contributes to the CTP binding site. Residue serine 13 coordinates UTP. 14 to 19 (GLGKGI) contacts ATP. L-glutamine is bound at residue tyrosine 54. Aspartate 71 provides a ligand contact to ATP. Residues aspartate 71 and glutamate 139 each contribute to the Mg(2+) site. Residues 146 to 148 (DIE), 186 to 191 (KTKPTQ), and lysine 222 contribute to the CTP site. UTP-binding positions include 186–191 (KTKPTQ) and lysine 222. The Glutamine amidotransferase type-1 domain occupies 290-532 (EIAIVGKYVK…VRAARERKYG (243 aa)). An L-glutamine-binding site is contributed by glycine 351. The active-site Nucleophile; for glutamine hydrolysis is cysteine 378. L-glutamine contacts are provided by residues 379–382 (FGFQ), glutamate 402, and arginine 459. Residues histidine 505 and glutamate 507 contribute to the active site.

This sequence belongs to the CTP synthase family. As to quaternary structure, homotetramer.

The enzyme catalyses UTP + L-glutamine + ATP + H2O = CTP + L-glutamate + ADP + phosphate + 2 H(+). It carries out the reaction L-glutamine + H2O = L-glutamate + NH4(+). It catalyses the reaction UTP + NH4(+) + ATP = CTP + ADP + phosphate + 2 H(+). It participates in pyrimidine metabolism; CTP biosynthesis via de novo pathway; CTP from UDP: step 2/2. Allosterically activated by GTP, when glutamine is the substrate; GTP has no effect on the reaction when ammonia is the substrate. The allosteric effector GTP functions by stabilizing the protein conformation that binds the tetrahedral intermediate(s) formed during glutamine hydrolysis. Inhibited by the product CTP, via allosteric rather than competitive inhibition. Functionally, catalyzes the ATP-dependent amination of UTP to CTP with either L-glutamine or ammonia as the source of nitrogen. Regulates intracellular CTP levels through interactions with the four ribonucleotide triphosphates. The polypeptide is CTP synthase (Thermococcus gammatolerans (strain DSM 15229 / JCM 11827 / EJ3)).